The chain runs to 390 residues: Phosphopentomutase (390 aa).

Mn(2+) is bound by residues Asp10, Asp282, His287, Asp323, His324, and His335.

Belongs to the phosphopentomutase family. Mn(2+) is required as a cofactor.

The protein resides in the cytoplasm. The enzyme catalyses 2-deoxy-alpha-D-ribose 1-phosphate = 2-deoxy-D-ribose 5-phosphate. It catalyses the reaction alpha-D-ribose 1-phosphate = D-ribose 5-phosphate. It functions in the pathway carbohydrate degradation; 2-deoxy-D-ribose 1-phosphate degradation; D-glyceraldehyde 3-phosphate and acetaldehyde from 2-deoxy-alpha-D-ribose 1-phosphate: step 1/2. Functionally, isomerase that catalyzes the conversion of deoxy-ribose 1-phosphate (dRib-1-P) and ribose 1-phosphate (Rib-1-P) to deoxy-ribose 5-phosphate (dRib-5-P) and ribose 5-phosphate (Rib-5-P), respectively. This is Phosphopentomutase from Lachnoclostridium phytofermentans (strain ATCC 700394 / DSM 18823 / ISDg) (Clostridium phytofermentans).